Reading from the N-terminus, the 399-residue chain is Carbamoyl phosphate synthase small chain (399 aa).

Positions 1–206 are CPSase; sequence MTQTIPSPKP…NKGYKTNNDA (206 aa). Residues Ser-60, Gly-258, and Gly-260 each coordinate L-glutamine. The Glutamine amidotransferase type-1 domain maps to 210–398; the sequence is HIVAIDYGIK…FNLIMDYKKT (189 aa). Cys-287 acts as the Nucleophile in catalysis. L-glutamine-binding residues include Leu-288, Gln-291, Asn-329, Gly-331, and Phe-332. Catalysis depends on residues His-371 and Glu-373.

The protein belongs to the CarA family. In terms of assembly, composed of two chains; the small (or glutamine) chain promotes the hydrolysis of glutamine to ammonia, which is used by the large (or ammonia) chain to synthesize carbamoyl phosphate. Tetramer of heterodimers (alpha,beta)4.

The enzyme catalyses hydrogencarbonate + L-glutamine + 2 ATP + H2O = carbamoyl phosphate + L-glutamate + 2 ADP + phosphate + 2 H(+). It catalyses the reaction L-glutamine + H2O = L-glutamate + NH4(+). It functions in the pathway amino-acid biosynthesis; L-arginine biosynthesis; carbamoyl phosphate from bicarbonate: step 1/1. It participates in pyrimidine metabolism; UMP biosynthesis via de novo pathway; (S)-dihydroorotate from bicarbonate: step 1/3. Its function is as follows. Small subunit of the glutamine-dependent carbamoyl phosphate synthetase (CPSase). CPSase catalyzes the formation of carbamoyl phosphate from the ammonia moiety of glutamine, carbonate, and phosphate donated by ATP, constituting the first step of 2 biosynthetic pathways, one leading to arginine and/or urea and the other to pyrimidine nucleotides. The small subunit (glutamine amidotransferase) binds and cleaves glutamine to supply the large subunit with the substrate ammonia. In Bartonella henselae (strain ATCC 49882 / DSM 28221 / CCUG 30454 / Houston 1) (Rochalimaea henselae), this protein is Carbamoyl phosphate synthase small chain.